A 206-amino-acid chain; its full sequence is Small ribosomal subunit protein uS4 (206 aa).

The region spanning 96-156 (GRLDNVVYRM…EKSKKQSRIK (61 aa)) is the S4 RNA-binding domain.

It belongs to the universal ribosomal protein uS4 family. Part of the 30S ribosomal subunit. Contacts protein S5. The interaction surface between S4 and S5 is involved in control of translational fidelity.

Its function is as follows. One of the primary rRNA binding proteins, it binds directly to 16S rRNA where it nucleates assembly of the body of the 30S subunit. In terms of biological role, with S5 and S12 plays an important role in translational accuracy. This Photorhabdus laumondii subsp. laumondii (strain DSM 15139 / CIP 105565 / TT01) (Photorhabdus luminescens subsp. laumondii) protein is Small ribosomal subunit protein uS4.